A 352-amino-acid chain; its full sequence is Histidine biosynthesis bifunctional protein HisB (352 aa).

The histidinol-phosphatase stretch occupies residues 1 to 163 (MKKILFIDRD…MVASAIINDA (163 aa)). Residue Asp-8 is the Nucleophile of the active site. Asp-8 and Asp-10 together coordinate Mg(2+). Asp-10 acts as the Proton donor in catalysis. 4 residues coordinate Zn(2+): Cys-91, His-93, Cys-99, and Cys-101. Residue Asp-128 coordinates Mg(2+). The tract at residues 164-352 (RKASVQRKTK…NYLPSTKGVL (189 aa)) is imidazoleglycerol-phosphate dehydratase.

It in the N-terminal section; belongs to the histidinol-phosphatase family. This sequence in the C-terminal section; belongs to the imidazoleglycerol-phosphate dehydratase family. Mg(2+) serves as cofactor. Requires Zn(2+) as cofactor.

Its subcellular location is the cytoplasm. It carries out the reaction D-erythro-1-(imidazol-4-yl)glycerol 3-phosphate = 3-(imidazol-4-yl)-2-oxopropyl phosphate + H2O. The catalysed reaction is L-histidinol phosphate + H2O = L-histidinol + phosphate. It participates in amino-acid biosynthesis; L-histidine biosynthesis; L-histidine from 5-phospho-alpha-D-ribose 1-diphosphate: step 6/9. The protein operates within amino-acid biosynthesis; L-histidine biosynthesis; L-histidine from 5-phospho-alpha-D-ribose 1-diphosphate: step 8/9. This Legionella pneumophila (strain Lens) protein is Histidine biosynthesis bifunctional protein HisB.